We begin with the raw amino-acid sequence, 155 residues long: UPF0178 protein Clos_2709 (155 aa).

It belongs to the UPF0178 family.

In Alkaliphilus oremlandii (strain OhILAs) (Clostridium oremlandii (strain OhILAs)), this protein is UPF0178 protein Clos_2709.